Reading from the N-terminus, the 509-residue chain is Cysteine--tRNA ligase (509 aa).

A Zn(2+)-binding site is contributed by Cys19. The short motif at 21-31 is the 'HIGH' region element; the sequence is PTVYNDAHIGH. Zn(2+) is bound by residues Cys213, His238, and Glu242. Residues 284 to 288 carry the 'KMSKS' region motif; sequence KMSKS. Residue Lys287 participates in ATP binding.

This sequence belongs to the class-I aminoacyl-tRNA synthetase family. It depends on Zn(2+) as a cofactor.

It catalyses the reaction tRNA(Cys) + L-cysteine + ATP = L-cysteinyl-tRNA(Cys) + AMP + diphosphate. In Acanthamoeba polyphaga (Amoeba), this protein is Cysteine--tRNA ligase (CARS).